The following is a 347-amino-acid chain: Phosphate acyltransferase (347 aa).

It belongs to the PlsX family. In terms of assembly, homodimer. Probably interacts with PlsY.

Its subcellular location is the cytoplasm. The catalysed reaction is a fatty acyl-[ACP] + phosphate = an acyl phosphate + holo-[ACP]. It participates in lipid metabolism; phospholipid metabolism. In terms of biological role, catalyzes the reversible formation of acyl-phosphate (acyl-PO(4)) from acyl-[acyl-carrier-protein] (acyl-ACP). This enzyme utilizes acyl-ACP as fatty acyl donor, but not acyl-CoA. The polypeptide is Phosphate acyltransferase (Syntrophotalea carbinolica (strain DSM 2380 / NBRC 103641 / GraBd1) (Pelobacter carbinolicus)).